Reading from the N-terminus, the 307-residue chain is Taste receptor type 2 member 10 (307 aa).

Over 1–6 (MLRVVE) the chain is Extracellular. A helical membrane pass occupies residues 7–27 (GIFIFVVISESVFGVLGNGFI). At 28 to 42 (GLVNCIDCAKNKLST) the chain is on the cytoplasmic side. A helical transmembrane segment spans residues 43–63 (IGFILTGLAISRIFLIWIIIT). Residues 64 to 100 (DGFIQIFSPNIYASSNLIEYISYFWVIGNQSSMWFAT) are Extracellular-facing. A helical transmembrane segment spans residues 101-121 (SLSIFYFLKIANFSNYIFLWL). Topologically, residues 122–126 (KSRTN) are cytoplasmic. A helical transmembrane segment spans residues 127–147 (MVLPFMIVFLLISSLLNFAYI). The Extracellular portion of the chain corresponds to 148–179 (AKILNDYKMKNDTVWDLNMYKSEYFIKQILLN). An N-linked (GlcNAc...) asparagine glycan is attached at Asn-158. Residues 180-200 (LGVIFFFTLSLITCVLLIISL) traverse the membrane as a helical segment. Residues 201-227 (WRHNRQMQSNVTGLRDSNTEAHVKAMK) are Cytoplasmic-facing. A helical membrane pass occupies residues 228–248 (VLISFIILFILYFIGMAIEIS). Topologically, residues 249–257 (YFTVRENKL) are extracellular. The helical transmembrane segment at 258–278 (LLMFGMTTTAIYPWGHSFILI) threads the bilayer. At 279–307 (LGNSKLKQASLRVLQQLKCCEKRKNLRVT) the chain is on the cytoplasmic side.

The protein belongs to the G-protein coupled receptor T2R family.

The protein localises to the membrane. Functionally, receptor that may play a role in the perception of bitterness and is gustducin-linked. May play a role in sensing the chemical composition of the gastrointestinal content. The activity of this receptor may stimulate alpha gustducin, mediate PLC-beta-2 activation and lead to the gating of TRPM5. This is Taste receptor type 2 member 10 (TAS2R10) from Pan paniscus (Pygmy chimpanzee).